The sequence spans 121 residues: Basic phospholipase A2 homolog piratoxin-1 (121 aa).

Cystine bridges form between Cys26–Cys115, Cys28–Cys44, Cys43–Cys95, Cys49–Cys121, Cys50–Cys88, Cys57–Cys81, and Cys75–Cys86. The important for membrane-damaging activities in eukaryotes and bacteria; heparin-binding stretch occupies residues 105-117 (KLYRYHLKPFCKK).

Belongs to the phospholipase A2 family. Group II subfamily. K49 sub-subfamily. In terms of assembly, homodimer; non-covalently linked. In terms of tissue distribution, expressed by the venom gland.

It localises to the secreted. With respect to regulation, rosmarinic acid inhibits the myotoxic activity. Bromophenacyl bromide (BPB) inhibits the myotoxic activity through a covalent binding. Caffeic acid and aristolochic acid, two plant compounds used in folk medicine used to treat envenomation, inhibit the myotoxic activity. Its function is as follows. Snake venom phospholipase A2 (PLA2) homolog that lacks enzymatic activity. Is myotoxic and displays edema-inducing activities. Induces neuromuscular blockage. A model of myotoxic mechanism has been proposed: an apo Lys49-PLA2 is activated by the entrance of a hydrophobic molecule (e.g. fatty acid) at the hydrophobic channel of the protein leading to a reorientation of a monomer. This reorientation causes a transition between 'inactive' to 'active' states, causing alignment of C-terminal and membrane-docking sites (MDoS) side-by-side and putting the membrane-disruption sites (MDiS) in the same plane, exposed to solvent and in a symmetric position for both monomers. The MDoS region stabilizes the toxin on membrane by the interaction of charged residues with phospholipid head groups. Subsequently, the MDiS region destabilizes the membrane with penetration of hydrophobic residues. This insertion causes a disorganization of the membrane, allowing an uncontrolled influx of ions (i.e. calcium and sodium), and eventually triggering irreversible intracellular alterations and cell death. This Bothrops pirajai (Piraja's lancehead) protein is Basic phospholipase A2 homolog piratoxin-1.